The following is an 834-amino-acid chain: DNA polymerase I, thermostable (834 aa).

The 87-residue stretch at 176 to 262 (RPEQWVDFRA…DLPLEVDLAQ (87 aa)) folds into the 5'-3' exonuclease domain. A polymerase region spans residues 412-834 (ERLHRNLLKR…MGEDWLSAKG (423 aa)).

Belongs to the DNA polymerase type-A family.

The enzyme catalyses DNA(n) + a 2'-deoxyribonucleoside 5'-triphosphate = DNA(n+1) + diphosphate. Functionally, in addition to polymerase activity, this DNA polymerase exhibits 5'-3' exonuclease activity. The chain is DNA polymerase I, thermostable (polA) from Thermus thermophilus (strain ATCC 27634 / DSM 579 / HB8).